Reading from the N-terminus, the 353-residue chain is Uroporphyrinogen decarboxylase (353 aa).

Residues 27–31 (RQAGR), F46, D76, Y152, S207, and H321 contribute to the substrate site.

It belongs to the uroporphyrinogen decarboxylase family. Homodimer.

The protein resides in the cytoplasm. The catalysed reaction is uroporphyrinogen III + 4 H(+) = coproporphyrinogen III + 4 CO2. It participates in porphyrin-containing compound metabolism; protoporphyrin-IX biosynthesis; coproporphyrinogen-III from 5-aminolevulinate: step 4/4. Its function is as follows. Catalyzes the decarboxylation of four acetate groups of uroporphyrinogen-III to yield coproporphyrinogen-III. The polypeptide is Uroporphyrinogen decarboxylase (Listeria monocytogenes serovar 1/2a (strain ATCC BAA-679 / EGD-e)).